Consider the following 319-residue polypeptide: G-protein coupled receptor 171 (319 aa).

The Extracellular segment spans residues methionine 1 to phenylalanine 21. A glycan (N-linked (GlcNAc...) asparagine) is linked at asparagine 3. Residues tyrosine 22–lysine 42 form a helical membrane-spanning segment. The Cytoplasmic portion of the chain corresponds to asparagine 43–cysteine 48. The chain crosses the membrane as a helical span at residues valine 49 to valine 69. Over lysine 70–valine 89 the chain is Extracellular. Residues threonine 90–isoleucine 110 traverse the membrane as a helical segment. The Cytoplasmic portion of the chain corresponds to aspartate 111–lysine 132. The helical transmembrane segment at methionine 133–proline 153 threads the bilayer. Over isoleucine 154–asparagine 181 the chain is Extracellular. Residues phenylalanine 182–valine 202 form a helical membrane-spanning segment. Topologically, residues isoleucine 203–serine 224 are cytoplasmic. The chain crosses the membrane as a helical span at residues isoleucine 225–proline 245. The Extracellular segment spans residues tyrosine 246–glutamate 268. Residues alanine 269 to serine 289 form a helical membrane-spanning segment. Residues lysine 290–alanine 319 lie on the Cytoplasmic side of the membrane.

The protein belongs to the G-protein coupled receptor 1 family.

It is found in the cell membrane. Its function is as follows. G-protein coupled receptor for Big LEN, a 16-amino acid neuropeptide produced from the precursor protein, proSAAS (encoded by PCSK1N). Acts through a G(i)-alpha-mediated pathway in response to bigLEN. Big LEN-GPR171 system plays an important role in regulating feeding and metabolism. Also plays a role in modulating fear and anxiety-like behaviors in the basolateral amygdala. Big LEN-GPR171 modulates the mu-type opioid receptor signaling and antinociception. Acts as a negative regulator T cell function. This is G-protein coupled receptor 171 (GPR171) from Bos taurus (Bovine).